The sequence spans 476 residues: Acyl-lipid omega-13 desaturase (476 aa).

One can recognise a Cytochrome b5 heme-binding domain in the interval 10 to 75 (GPALPSIPHQ…HLRVLERFRV (66 aa)). The heme site is built by histidine 37 and histidine 60. A run of 2 helical transmembrane segments spans residues 146–166 (PFVI…KLWW) and 168–188 (GAFI…AAMV). Residues 189–193 (HDGGH) carry the Histidine box-1 motif. The short motif at 224–229 (HNILHH) is the Histidine box-2 element. 3 consecutive transmembrane segments (helical) span residues 267–287 (FFSH…ISPL), 315–335 (YHST…TPFL), and 343–363 (LLLT…IAQV). The short motif at 410–414 (QSLHH) is the Histidine box-3 element.

The protein belongs to the fatty acid desaturase type 1 family.

It is found in the membrane. It carries out the reaction a (9Z,12Z)-octadecadienoyl-containing glycerolipid + 2 Fe(II)-[cytochrome b5] + O2 + 2 H(+) = a (5Z,9Z,12Z)-octadecatrienoyl-containing glycerolipid + 2 Fe(III)-[cytochrome b5] + 2 H2O. The enzyme catalyses (9Z,12Z,15Z)-octadecatrienoyl-containing glycerolipid + 2 Fe(II)-[cytochrome b5] + O2 + 2 H(+) = a (5Z,9Z,12Z,15Z)-octadecatetraenoyl-containing glycerolipid + 2 Fe(III)-[cytochrome b5] + 2 H2O. It functions in the pathway lipid metabolism; polyunsaturated fatty acid biosynthesis. Its function is as follows. Front-end desaturase having a omega-13 desaturase activity for omega-9 unsaturated C18/C20 fatty acids. Strong substrate preferences for linoleic acid and alpha-linolenic acid for the production of pinolenic and coniferonic acids respectively. No desaturase activity for dihomo gamma-linolenic acid and eicosatertraenoic acid. The protein is Acyl-lipid omega-13 desaturase of Chlamydomonas reinhardtii (Chlamydomonas smithii).